The primary structure comprises 974 residues: Probable proton ATPase 1A (974 aa).

The segment covering 1–23 (MSSKKYELDAAAFEDKPESHSDA) has biased composition (basic and acidic residues). The interval 1-61 (MSSKKYELDA…ATDLLPPSKG (61 aa)) is disordered. At 1–92 (MSSKKYELDA…KTPSWLIYVR (92 aa)) the chain is on the cytoplasmic side. The helical transmembrane segment at 93–112 (GLWGPMPAALWIAIIIEFAL) threads the bilayer. Topologically, residues 113-117 (ENWPD) are extracellular. A helical membrane pass occupies residues 118-137 (GAILFAIQIANATIGWYETI). Residues 138-264 (KAGDAVAALK…LGNIHVILRR (127 aa)) lie on the Cytoplasmic side of the membrane. The chain crosses the membrane as a helical span at residues 265–286 (VMFSLCAISFMLCMCCFIYLLA). The Extracellular portion of the chain corresponds to 287–294 (RFYETFRH). A helical transmembrane segment spans residues 295-321 (ALQFAVVVLVVSIPIALEIVVTTTLAV). The Cytoplasmic portion of the chain corresponds to 322–630 (GSKHLSKHKI…AVHGATDAAR (309 aa)). Aspartate 351 serves as the catalytic 4-aspartylphosphate intermediate. Mg(2+) contacts are provided by aspartate 605 and aspartate 609. Residues 631–651 (AAADMVLTEPGLSVVVEAMLV) traverse the membrane as a helical segment. The Extracellular segment spans residues 652–661 (SREVFQRMLS). Residues 662–684 (FLTYRISATLQLVCFFFIACFSL) traverse the membrane as a helical segment. Residues 685 to 697 (TPKAYGSVDPHFQ) are Cytoplasmic-facing. A helical transmembrane segment spans residues 698–712 (FFHLPVLMFMLITLL). The Extracellular segment spans residues 713–737 (NDGCLMTIGYDHVIPSERPQKWNLP). Aspartate 714 contacts Mg(2+). The chain crosses the membrane as a helical span at residues 738-761 (VVFVSASILAAVACGSSLMLLWIG). The Cytoplasmic segment spans residues 762–812 (LEGYSSQYYENSWFHRLGLAQLPQGKLVTMMYLKISISDFLTLFSSRTGGH). Residues 813 to 840 (FFFYMPPSPILFCGAIISLLVSTMAASF) traverse the membrane as a helical segment. The Extracellular segment spans residues 841–868 (WHKSRPDNVLTEGLAWGQTNAEKLLPLW). A helical membrane pass occupies residues 869-887 (VWIYCIVWWFVQDVVKVLA). Residues 888 to 974 (HICMDAVDLF…VNVYVSRDQK (87 aa)) lie on the Cytoplasmic side of the membrane. Positions 950 to 959 (GLREDTHSPI) are enriched in basic and acidic residues. The segment at 950–974 (GLREDTHSPIEEASPVNVYVSRDQK) is disordered.

The protein belongs to the cation transport ATPase (P-type) (TC 3.A.3) family. Type IIIA subfamily.

It is found in the membrane. The enzyme catalyses ATP + H2O + H(+)(in) = ADP + phosphate + 2 H(+)(out). The chain is Probable proton ATPase 1A (H1A) from Leishmania donovani.